Here is a 63-residue protein sequence, read N- to C-terminus: Small, acid-soluble spore protein H 2 (63 aa).

The protein belongs to the SspH family.

The protein localises to the spore core. The sequence is that of Small, acid-soluble spore protein H 2 from Clostridium botulinum (strain ATCC 19397 / Type A).